Reading from the N-terminus, the 287-residue chain is Coatomer subunit epsilon-1 (287 aa).

The protein belongs to the COPE family. In terms of assembly, oligomeric complex that consists of at least the alpha, beta, beta', gamma, delta, epsilon and zeta subunits.

The protein localises to the cytoplasm. It is found in the golgi apparatus membrane. The protein resides in the cytoplasmic vesicle. It localises to the COPI-coated vesicle membrane. The coatomer is a cytosolic protein complex that binds to dilysine motifs and reversibly associates with Golgi non-clathrin-coated vesicles, which further mediate biosynthetic protein transport from the ER, via the Golgi up to the trans Golgi network. The coatomer complex is required for budding from Golgi membranes, and is essential for the retrograde Golgi-to-ER transport of dilysine-tagged proteins. The protein is Coatomer subunit epsilon-1 (COPE1) of Oryza sativa subsp. japonica (Rice).